A 99-amino-acid polypeptide reads, in one-letter code: CLAVATA3/ESR (CLE)-related protein 17 (99 aa).

An N-terminal signal peptide occupies residues 1–21 (MTHVLVRRQGQGKKRRWDVNM). The segment covering 77-89 (LSRDDIYGDDKRV) has biased composition (basic and acidic residues). Positions 77-99 (LSRDDIYGDDKRVVHTGPNPLHN) are disordered. A Hydroxyproline modification is found at Pro94. O-linked (Ara...) hydroxyproline glycosylation occurs at Pro94.

This sequence belongs to the CLV3/ESR signal peptide family. In terms of processing, the O-glycosylation (arabinosylation) of the hydroxyproline Pro-94 enhances binding affinity of the CLE17p peptide for its receptor. Mostly expressed in seedlings, roots, flowers, stems and apex, and, to a lower extent, in leaves and siliques.

The protein resides in the secreted. It localises to the extracellular space. Its function is as follows. Extracellular signal peptide that regulates cell fate. Represses root apical meristem maintenance. Regulates the transition of protophloem cells from proliferation to differentiation, thus impinging on postembryonic growth capacity of the root meristem; this signaling pathway requires CRN and CLV2. In Arabidopsis thaliana (Mouse-ear cress), this protein is CLAVATA3/ESR (CLE)-related protein 17.